The chain runs to 549 residues: MKPYLAQARSWASLLQHYGCIKKQHMRDLFAADPQRFDKFSLIFNGILFDFSKNRITEETLKLLLDLARERELQQGISRMFAGEPINNTENRPVLHVALRNRANRPIMVKGKDVMPQVNVVLERMGKFCDRVHRGQWRGFSGERLTDIVNIGIGGSDLGPAMVTEALQPYAKSGFRVHFVSNIDGTQLAETLKTIRPETALFVISSKTFTTQETLTNAHSARNWFLRAAPDDKAIAKHFIAVSTNRSEVEKFGIDPCNMFEFWDWVGGRYSLWSAIGLSIALYLGMENFEQLLEGAHEMDKHFQETPLKQNIPVIAALVGIWNINFLGAQSHAVLPYDQYLERFPAYLQQLEMESNGKHVTRGGASVNYATGNVIWGAPGTNGQHAFFQLLHQGTPLITADFLASAESHNPLGEHHQILLSNFFAQTEALMKGKDEAEVRAELEEANLAKGEVEALIPHKLFDGNRPSNSFLFSKLTPWTLGALIAFYEHKVFTQGLIWDINSFDQWGVELGKQLATTILPELQGGEEVNSHDSSTNGLINYYKRIRHL.

E354 serves as the catalytic Proton donor. Active-site residues include H385 and K513.

Belongs to the GPI family.

Its subcellular location is the cytoplasm. It carries out the reaction alpha-D-glucose 6-phosphate = beta-D-fructose 6-phosphate. It functions in the pathway carbohydrate biosynthesis; gluconeogenesis. The protein operates within carbohydrate degradation; glycolysis; D-glyceraldehyde 3-phosphate and glycerone phosphate from D-glucose: step 2/4. Functionally, catalyzes the reversible isomerization of glucose-6-phosphate to fructose-6-phosphate. The chain is Glucose-6-phosphate isomerase from Nitrosococcus oceani (strain ATCC 19707 / BCRC 17464 / JCM 30415 / NCIMB 11848 / C-107).